A 4592-amino-acid polypeptide reads, in one-letter code: Intermembrane lipid transfer protein vps13D (4592 aa).

The Chorein N-terminal domain maps to 3-102 (FESVVAEVID…SSTNVSSNYS (100 aa)). Disordered stretches follow at residues 95 to 142 (TNVS…TASQ), 157 to 199 (LDKK…IDSQ), 286 to 307 (STTSSNNNNNNNNNNTTSSSSS), 445 to 529 (KKDD…IKGI), 574 to 605 (SNSTTTNNSNNNSSSSPNILATSPSNNSLSPM), 826 to 861 (NYNNQSSSSSSSSQPPPPKPTEETSTTNKPKKQQGI), 1040 to 1083 (TTSP…KRQW), 1219 to 1249 (YFKNKRKEENEQNEGNTEDDEQEEEEQEKKP), 1655 to 1717 (QQQE…QQSN), 1855 to 1886 (SNNNNDNNNDNNNSNNSNNNNNTSNGSGNSLF), 1971 to 2001 (TSSLDNTSISTTTTTTTTTTTTTTTTTTTTS), 2025 to 2056 (PLINDNSNKSPTSKSSSSKSSSSKSSKKEQQQ), and 2245 to 2270 (NNNNNNNNNNNNNNNNNNNNNTNIIN). 2 stretches are compositionally biased toward low complexity: residues 117–139 (SSSNNNNNNNNDSSSSSSNTTST) and 172–199 (KSTNTTTNNNGINNSNDKNKNNNNIDSQ). The stretch at 437 to 517 (KNATIKLNKK…KKKEEKGKSK (81 aa)) forms a coiled coil. The segment covering 445-457 (KKDDKKDDKKDDI) has biased composition (basic and acidic residues). Over residues 458–474 (NSSSSSIGSSNSSNNTP) the composition is skewed to low complexity. The segment covering 475-529 (TKDKNKEKEKDKEKEKEKEKKKEKEKLKLEEKKKKKEEKGKSKSKDSKKNKIKGI) has biased composition (basic and acidic residues). Residues 574–591 (SNSTTTNNSNNNSSSSPN) show a composition bias toward low complexity. The segment covering 592 to 603 (ILATSPSNNSLS) has biased composition (polar residues). Low complexity predominate over residues 829–838 (NQSSSSSSSS). Positions 1040–1059 (TTSPTFNSLNNKPSTLQNNH) are enriched in polar residues. The span at 1064–1076 (NGNSSNNNNTDSP) shows a compositional bias: low complexity. Residues 1234–1244 (NTEDDEQEEEE) are compositionally biased toward acidic residues. 2 stretches are compositionally biased toward low complexity: residues 1669–1689 (KSINSKPPSPKLSLMSPLRKS) and 1702–1715 (QQQQQQQQQQQQQQ). Residues 2037–2048 (SKSSSSKSSSSK) are compositionally biased toward low complexity. The TPR 1 repeat unit spans residues 2321-2354 (TLQINDLGANIISIGNKSTSIKCFLRSIRLSDSR). 7 disordered regions span residues 2456–2489 (KTNNNNNNNNNNYNNTNSNNNNNQEEEEKDSIST), 2862–2882 (AVSTSNNPNGSGYNNSNNNNG), 3006–3035 (GEQKGKKKSTSTSTSPTLSSQPSSSSSSSS), 3106–3129 (NSSGYNSSSPSPSSSSSPSSSSSN), 3356–3384 (KLPTSPQTSSSSSPPPATTTTSTTTKRTT), 3560–3580 (NSLKIEQGRKSKKQQQQHRHN), and 3630–3679 (STNH…SKLK). Low complexity-rich tracts occupy residues 2458-2478 (NNNNNNNNNNYNNTNSNNNNN), 2864-2880 (STSNNPNGSGYNNSNNN), and 3015-3035 (TSTSTSPTLSSQPSSSSSSSS). Over residues 3358–3384 (PTSPQTSSSSSPPPATTTTSTTTKRTT) the composition is skewed to low complexity. Over residues 3569 to 3580 (KSKKQQQQHRHN) the composition is skewed to basic residues. Low complexity predominate over residues 3640–3679 (SSTFNNSSNDNINNGNSNNNTSNSLSPPSSSSSINLSKLK). A TPR 2 repeat occupies 3789 to 3822 (EVPKPYLGRVDIKDNDTHTSIHFYDQDTEYSPFR). Composition is skewed to low complexity over residues 3872–3894 (TTTTTTTTNSTNDINNDNNNNNN) and 4111–4135 (QQLQQNPQQQQPQQQNNEIQNNPIN). 2 disordered regions span residues 3872 to 3897 (TTTTTTTTNSTNDINNDNNNNNNQYI) and 4105 to 4135 (KKHKKNQQLQQNPQQQQPQQQNNEIQNNPIN).

The protein resides in the membrane. Mediates the transfer of lipids between membranes at organelle contact sites. In Dictyostelium discoideum (Social amoeba), this protein is Intermembrane lipid transfer protein vps13D (vps13D).